Reading from the N-terminus, the 281-residue chain is Shikimate dehydrogenase (NADP(+)) (281 aa).

Shikimate contacts are provided by residues S14–S16 and T61. The active-site Proton acceptor is the K65. Residues N86 and D105 each contribute to the shikimate site. NADP(+)-binding positions include G130–A134, N154–K159, and M221. Y223 is a shikimate binding site. Residue G245 coordinates NADP(+).

The protein belongs to the shikimate dehydrogenase family. Homodimer.

It carries out the reaction shikimate + NADP(+) = 3-dehydroshikimate + NADPH + H(+). It participates in metabolic intermediate biosynthesis; chorismate biosynthesis; chorismate from D-erythrose 4-phosphate and phosphoenolpyruvate: step 4/7. Functionally, involved in the biosynthesis of the chorismate, which leads to the biosynthesis of aromatic amino acids. Catalyzes the reversible NADPH linked reduction of 3-dehydroshikimate (DHSA) to yield shikimate (SA). This Azoarcus sp. (strain BH72) protein is Shikimate dehydrogenase (NADP(+)).